Here is a 344-residue protein sequence, read N- to C-terminus: UDP-glucose 4-epimerase (344 aa).

Residues 15-17 (GYI), 36-40 (DNLSN), 63-64 (DI), Phe85, and Lys89 each bind NAD(+). 129-131 (SAT) lines the substrate pocket. Tyr153 acts as the Proton acceptor in catalysis. NAD(+)-binding residues include Lys157 and Tyr181. Residues 181 to 183 (YFN), 202 to 204 (NNL), 220 to 222 (SIF), Arg235, and 297 to 300 (RKGD) each bind substrate.

The protein belongs to the NAD(P)-dependent epimerase/dehydratase family. Homodimer. NAD(+) is required as a cofactor.

It catalyses the reaction UDP-alpha-D-glucose = UDP-alpha-D-galactose. It carries out the reaction UDP-N-acetyl-alpha-D-glucosamine = UDP-N-acetyl-alpha-D-galactosamine. It functions in the pathway carbohydrate metabolism; galactose metabolism. In terms of biological role, catalyzes two distinct but analogous reactions: the reversible epimerization of UDP-glucose to UDP-galactose and the reversible epimerization of UDP-N-acetylglucosamine to UDP-N-acetylgalactosamine. The reaction with UDP-Gal plays a critical role in the Leloir pathway of galactose catabolism in which galactose is converted to the glycolytic intermediate glucose 6-phosphate. It contributes to the catabolism of dietary galactose and enables the endogenous biosynthesis of both UDP-Gal and UDP-GalNAc when exogenous sources are limited. Both UDP-sugar interconversions are important in the synthesis of glycoproteins and glycolipids. This is UDP-glucose 4-epimerase (galE) from Dictyostelium discoideum (Social amoeba).